Consider the following 394-residue polypeptide: Elongation factor Tu (394 aa).

The 195-residue stretch at 10 to 204 (KPHVNVGTIG…ALDSYIPTPE (195 aa)) folds into the tr-type G domain. Positions 19-26 (GHVDHGKT) are G1. 19–26 (GHVDHGKT) is a binding site for GTP. A Mg(2+)-binding site is contributed by T26. Positions 60–64 (GITIN) are G2. Residues 81–84 (DCPG) are G3. GTP-binding positions include 81-85 (DCPGH) and 136-139 (NKCD). The G4 stretch occupies residues 136–139 (NKCD). The segment at 174–176 (SAL) is G5.

Belongs to the TRAFAC class translation factor GTPase superfamily. Classic translation factor GTPase family. EF-Tu/EF-1A subfamily. Monomer.

Its subcellular location is the cytoplasm. The enzyme catalyses GTP + H2O = GDP + phosphate + H(+). Its function is as follows. GTP hydrolase that promotes the GTP-dependent binding of aminoacyl-tRNA to the A-site of ribosomes during protein biosynthesis. In Neisseria meningitidis serogroup A / serotype 4A (strain DSM 15465 / Z2491), this protein is Elongation factor Tu.